The sequence spans 266 residues: Thymidylate synthase (266 aa).

DUMP is bound by residues Arg21 and 127-128; that span reads RR. Cys147 acts as the Nucleophile in catalysis. DUMP is bound by residues 168–171, Asn179, and 209–211; these read RSAD and HIY. Position 171 (Asp171) interacts with (6R)-5,10-methylene-5,6,7,8-tetrahydrofolate. Ala265 provides a ligand contact to (6R)-5,10-methylene-5,6,7,8-tetrahydrofolate.

Belongs to the thymidylate synthase family. Bacterial-type ThyA subfamily. As to quaternary structure, homodimer.

The protein localises to the cytoplasm. The catalysed reaction is dUMP + (6R)-5,10-methylene-5,6,7,8-tetrahydrofolate = 7,8-dihydrofolate + dTMP. It participates in pyrimidine metabolism; dTTP biosynthesis. Functionally, catalyzes the reductive methylation of 2'-deoxyuridine-5'-monophosphate (dUMP) to 2'-deoxythymidine-5'-monophosphate (dTMP) while utilizing 5,10-methylenetetrahydrofolate (mTHF) as the methyl donor and reductant in the reaction, yielding dihydrofolate (DHF) as a by-product. This enzymatic reaction provides an intracellular de novo source of dTMP, an essential precursor for DNA biosynthesis. In Brachyspira hyodysenteriae (strain ATCC 49526 / WA1), this protein is Thymidylate synthase.